A 601-amino-acid polypeptide reads, in one-letter code: Dual specificity tyrosine-phosphorylation-regulated kinase 2 (601 aa).

The tract at residues 1–24 (MLTRKPSAAAPAAYPTGRGGDSAV) is disordered. Serine 30 is subject to Phosphoserine. Threonine 106 is modified (phosphothreonine; by ATM). The Nuclear localization signal motif lies at 189–191 (KKR). One can recognise a Protein kinase domain in the interval 222–535 (YEVLKVIGKG…PGQALRHPWL (314 aa)). Residues 228-236 (IGKGSFGQV), lysine 251, and 301-304 (FELL) each bind ATP. The active-site Proton acceptor is the aspartate 348. Residue threonine 381 is modified to Phosphothreonine; by MAP3K10. Tyrosine 382 is modified (phosphotyrosine; by autocatalysis). Residue serine 442 is modified to Phosphoserine; by ATM. Serine 449 is modified (phosphoserine; by MAP3K10).

This sequence belongs to the protein kinase superfamily. CMGC Ser/Thr protein kinase family. MNB/DYRK subfamily. In terms of assembly, component of an E3 ligase complex containing DYRK2, EDD/UBR5, DDB1 and DCAF1 (EDVP complex). Interacts directly with EDD/UBR5, DDB1 and DCAF1. Interacts with SIAH2 and MDM2. Interacts with MAP3K10 and NFATC1. May also interact with CCNL2. Mg(2+) is required as a cofactor. Requires Mn(2+) as cofactor. In terms of processing, autophosphorylates cotranslationally on the second tyrosine residue in the Tyr-X-Tyr motif in the activation loop, but once mature, does not have any protein tyrosine kinase activity. Phosphorylated at Thr-106 and Ser-442 by ATM in response to genotoxic stress. Post-translationally, under normal conditions, polyubiquitinated in the nucleus by MDM2, leading to its proteasomal degradation. Phosphorylation on Thr-106 and Ser-442 by ATM in response to genotoxic stress disrupts MDM2 binding and prevents MDM2-mediated ubiquitination and subsequent proteasomal degradation. Polyubiquitinated by SIAH2, leading to its proteasomal degradation. Polyubiquitinated by SIAH2 occurs under normal conditions, and is enhanced in response to hypoxia. As to expression, testis, after the onset of spermatogenesis.

It localises to the cytoplasm. The protein resides in the nucleus. It catalyses the reaction L-seryl-[protein] + ATP = O-phospho-L-seryl-[protein] + ADP + H(+). It carries out the reaction L-threonyl-[protein] + ATP = O-phospho-L-threonyl-[protein] + ADP + H(+). The enzyme catalyses L-tyrosyl-[protein] + ATP = O-phospho-L-tyrosyl-[protein] + ADP + H(+). With respect to regulation, activated by autophosphorylation on the second tyrosine residue in the Tyr-X-Tyr motif in the activation loop. Inhibited by acridine analogs, purvalanol, and barely by harmine. Inhibited by leucettine and leucettine derivatives. Its function is as follows. Serine/threonine-protein kinase involved in the regulation of the mitotic cell cycle, cell proliferation, apoptosis, organization of the cytoskeleton and neurite outgrowth. Functions in part via its role in ubiquitin-dependent proteasomal protein degradation. Functions downstream of ATM and phosphorylates p53/TP53 at 'Ser-46', and thereby contributes to the induction of apoptosis in response to DNA damage. Phosphorylates NFATC1, and thereby inhibits its accumulation in the nucleus and its transcription factor activity. Phosphorylates EIF2B5 at 'Ser-544', enabling its subsequent phosphorylation and inhibition by GSK3B. Likewise, phosphorylation of NFATC1, CRMP2/DPYSL2 and CRMP4/DPYSL3 promotes their subsequent phosphorylation by GSK3B. May play a general role in the priming of GSK3 substrates. Inactivates GYS1 by phosphorylation at 'Ser-641', and potentially also a second phosphorylation site, thus regulating glycogen synthesis. Mediates EDVP E3 ligase complex formation and is required for the phosphorylation and subsequent degradation of KATNA1. Phosphorylates TERT at 'Ser-457', promoting TERT ubiquitination by the EDVP complex. Phosphorylates SIAH2, and thereby increases its ubiquitin ligase activity. Promotes the proteasomal degradation of MYC and JUN, and thereby regulates progress through the mitotic cell cycle and cell proliferation. Promotes proteasomal degradation of GLI2 and GLI3, and thereby plays a role in smoothened and sonic hedgehog signaling. Plays a role in cytoskeleton organization and neurite outgrowth via its phosphorylation of DCX and DPYSL2. Phosphorylates CRMP2/DPYSL2, CRMP4/DPYSL3, DCX, EIF2B5, EIF4EBP1, GLI2, GLI3, GYS1, JUN, MDM2, MYC, NFATC1, p53/TP53, TAU/MAPT and KATNA1. Can phosphorylate histone H1, histone H3 and histone H2B (in vitro). Can phosphorylate CARHSP1 (in vitro). In Homo sapiens (Human), this protein is Dual specificity tyrosine-phosphorylation-regulated kinase 2 (DYRK2).